A 317-amino-acid chain; its full sequence is Ferrochelatase (317 aa).

Fe cation is bound by residues His192 and Glu271.

The protein belongs to the ferrochelatase family.

It localises to the cytoplasm. It catalyses the reaction heme b + 2 H(+) = protoporphyrin IX + Fe(2+). Its pathway is porphyrin-containing compound metabolism; protoheme biosynthesis; protoheme from protoporphyrin-IX: step 1/1. Catalyzes the ferrous insertion into protoporphyrin IX. The chain is Ferrochelatase from Citrifermentans bemidjiense (strain ATCC BAA-1014 / DSM 16622 / JCM 12645 / Bem) (Geobacter bemidjiensis).